Reading from the N-terminus, the 61-residue chain is Venom protein 22.1 (61 aa).

A signal peptide spans 1–18; the sequence is MDIKGLLVILFFVLLITG.

Belongs to the non-disulfide-bridged peptide (NDBP) superfamily. Long chain multifunctional peptide (group 2) family. Expressed by the venom gland.

It is found in the secreted. This is Venom protein 22.1 from Lychas mucronatus (Chinese swimming scorpion).